We begin with the raw amino-acid sequence, 446 residues long: Acyl-lipid (8-3)-desaturase (446 aa).

Residues 6 to 82 enclose the Cytochrome b5 heme-binding domain; the sequence is GKTFTWEELA…MKKYYVGTLV (77 aa). Residues His41 and His64 each contribute to the heme site. 2 helical membrane-spanning segments follow: residues 125 to 145 and 150 to 170; these read ALIF…PFVV and LQVV…LNPL. A Histidine box-1 motif is present at residues 171 to 175; it reads HDASH. The Histidine box-2 motif lies at 207–212; sequence HMLGHH. A Histidine box-3 motif is present at residues 387-391; that stretch reads QAVHH.

Belongs to the fatty acid desaturase type 1 family. Fe(2+) is required as a cofactor.

It localises to the membrane. It carries out the reaction an (8Z,11Z,14Z)-icosatrienoyl-containing glycerolipid + 2 Fe(II)-[cytochrome b5] + O2 + 2 H(+) = (5Z,8Z,11Z,14Z)-eicosatetraenoyl-containing glycerolipid + 2 Fe(III)-[cytochrome b5] + 2 H2O. The enzyme catalyses an (8Z,11Z,14Z,17Z)-eicosatetraenoyl-containing glycerolipid + 2 Fe(II)-[cytochrome b5] + O2 + 2 H(+) = a (5Z,8Z,11Z,14Z,17Z)-eicosapentaenoyl-containing glycerolipid + 2 Fe(III)-[cytochrome b5] + 2 H2O. Fatty acid desaturase that introduces a cis double bond at the 5-position in 20-carbon polyunsaturated fatty acids incorporated in a glycerolipid that contain a Delta(8) double bond. Involved in the conversion of di-homo-Delta-linolenic acid to arachidonic acid. Essential in the production of eicosanoids. The sequence is that of Acyl-lipid (8-3)-desaturase (DES1) from Mortierella alpina (Oleaginous fungus).